The primary structure comprises 165 residues: MKNKLIAKSLLTIAAIGITTTTIASTADASEGYGPREKKPVSINHNIVEYNDGTFKYQSRPKFNSTPKYIKFKHDYNILEFNDGTFEYGARPQFNKPAAKTDATIKKEQKLIQAQNLVREFEKTHTVSAHRKAQKAVNLVSFEYKVKKMVLQERIDNVLKQGLVK.

A signal peptide spans 1 to 29 (MKNKLIAKSLLTIAAIGITTTTIASTADA).

Interacts with host fibrinogen alpha chain/FGA. Interacts with host complement protein C3.

Its subcellular location is the secreted. In terms of biological role, extracellular fibrinogen-binding protein that plays an important role in virulence. By interacting with the alpha chain of fibrinogen and its derivative fibrin, enhances a non-functional interaction between fibrinogen and platelets and is responsible for repression of fibrinogen-dependent platelet aggregation. In addition, assembles a fibrinogen protective shield around the bacteria which results in impaired phagocytic clearance by the host. Mechanistically, interacts with host complement C3b deposited on the surface of the bacterium via its C-terminal and then recruits fibrinogen via its N-terminal. This chain is Fibrinogen-binding protein (fib), found in Staphylococcus aureus (strain MSSA476).